Here is a 369-residue protein sequence, read N- to C-terminus: Phospho-N-acetylmuramoyl-pentapeptide-transferase (369 aa).

The next 10 membrane-spanning stretches (helical) occupy residues 2–22 (IALL…TPLF), 55–75 (TVVV…MFLM), 86–106 (ALIL…DDFI), 120–140 (AKLI…LNFP), 163–183 (LAFG…NLIV), 196–216 (LDGL…LMGI), 239–259 (PLDL…FLWW), 266–286 (IFMG…FAIL), 291–311 (LLLG…IIQV), and 348–368 (ILGG…WVVL).

It belongs to the glycosyltransferase 4 family. MraY subfamily. Mg(2+) serves as cofactor.

The protein resides in the cell membrane. It carries out the reaction UDP-N-acetyl-alpha-D-muramoyl-L-alanyl-gamma-D-glutamyl-meso-2,6-diaminopimeloyl-D-alanyl-D-alanine + di-trans,octa-cis-undecaprenyl phosphate = di-trans,octa-cis-undecaprenyl diphospho-N-acetyl-alpha-D-muramoyl-L-alanyl-D-glutamyl-meso-2,6-diaminopimeloyl-D-alanyl-D-alanine + UMP. Its pathway is cell wall biogenesis; peptidoglycan biosynthesis. Its function is as follows. Catalyzes the initial step of the lipid cycle reactions in the biosynthesis of the cell wall peptidoglycan: transfers peptidoglycan precursor phospho-MurNAc-pentapeptide from UDP-MurNAc-pentapeptide onto the lipid carrier undecaprenyl phosphate, yielding undecaprenyl-pyrophosphoryl-MurNAc-pentapeptide, known as lipid I. This is Phospho-N-acetylmuramoyl-pentapeptide-transferase from Pseudarthrobacter chlorophenolicus (strain ATCC 700700 / DSM 12829 / CIP 107037 / JCM 12360 / KCTC 9906 / NCIMB 13794 / A6) (Arthrobacter chlorophenolicus).